Consider the following 382-residue polypeptide: Homeobox protein SHOOT MERISTEMLESS (382 aa).

The segment at 26-59 (MMMMMPPIMTSHQHHGHDHQHQQQEHDGYAYQSH) is disordered. Over residues 44 to 53 (HQHQQQEHDG) the composition is skewed to basic and acidic residues. Positions 262-282 (ELKGQLLRKYSGYLGSLKQEF) constitute an ELK domain. The segment at residues 283–346 (MKKRKKGKLP…NQRKRHWKPS (64 aa)) is a DNA-binding region (homeobox; TALE-type).

The protein belongs to the TALE/KNOX homeobox family. In terms of assembly, forms homodimers. May form heterodimeric complexes with TALE/BELL proteins BEL1, BLH2, BLH3, BLH8/PNF, BLH9/PNY and ATH1. Interacts with CCT8. Binds to MBP2C; this interaction reduces RNA binding capacity. Interacts with FTIP3 and FTIP4. As to expression, expressed in all four types of shoot apical meristems (SAM) i.e. in vegetative, axillary, inflorescence and floral.

Its subcellular location is the nucleus. It is found in the cell junction. The protein resides in the plasmodesma. It localises to the cytoplasm. The protein localises to the endosome. Its subcellular location is the cell membrane. Functionally, required for shoot apical meristem (SAM) formation during embryogenesis. Negatively regulates ASYMMETRIC LEAVES1 (AS1) and ASYMMETRIC LEAVES2 (AS2 or LBD6). Probably binds to the DNA sequence 5'-TGAC-3'. Binds to RNA. This Arabidopsis thaliana (Mouse-ear cress) protein is Homeobox protein SHOOT MERISTEMLESS.